Reading from the N-terminus, the 311-residue chain is Pyrimidine-specific ribonucleoside hydrolase RihA (311 aa).

The active site involves H240.

It belongs to the IUNH family. RihA subfamily.

Its function is as follows. Hydrolyzes with equal efficiency cytidine or uridine to ribose and cytosine or uracil, respectively. This chain is Pyrimidine-specific ribonucleoside hydrolase RihA, found in Escherichia coli (strain K12 / MC4100 / BW2952).